Reading from the N-terminus, the 764-residue chain is 1,4-alpha-glucan branching enzyme GlgB (764 aa).

The interval 1–46 (MSAARQPSPTVRDKAAPEPAAPAAPKGARAPRARRAAPPHGVRPAP) is disordered. A compositionally biased stretch (low complexity) spans 17-28 (PEPAAPAAPKGA). D440 serves as the catalytic Nucleophile. E493 serves as the catalytic Proton donor.

The protein belongs to the glycosyl hydrolase 13 family. GlgB subfamily. Monomer.

The catalysed reaction is Transfers a segment of a (1-&gt;4)-alpha-D-glucan chain to a primary hydroxy group in a similar glucan chain.. The protein operates within glycan biosynthesis; glycogen biosynthesis. Catalyzes the formation of the alpha-1,6-glucosidic linkages in glycogen by scission of a 1,4-alpha-linked oligosaccharide from growing alpha-1,4-glucan chains and the subsequent attachment of the oligosaccharide to the alpha-1,6 position. The sequence is that of 1,4-alpha-glucan branching enzyme GlgB (glgB) from Kitasatospora aureofaciens (Streptomyces aureofaciens).